Here is a 160-residue protein sequence, read N- to C-terminus: SsrA-binding protein (160 aa).

It belongs to the SmpB family.

The protein localises to the cytoplasm. Its function is as follows. Required for rescue of stalled ribosomes mediated by trans-translation. Binds to transfer-messenger RNA (tmRNA), required for stable association of tmRNA with ribosomes. tmRNA and SmpB together mimic tRNA shape, replacing the anticodon stem-loop with SmpB. tmRNA is encoded by the ssrA gene; the 2 termini fold to resemble tRNA(Ala) and it encodes a 'tag peptide', a short internal open reading frame. During trans-translation Ala-aminoacylated tmRNA acts like a tRNA, entering the A-site of stalled ribosomes, displacing the stalled mRNA. The ribosome then switches to translate the ORF on the tmRNA; the nascent peptide is terminated with the 'tag peptide' encoded by the tmRNA and targeted for degradation. The ribosome is freed to recommence translation, which seems to be the essential function of trans-translation. The sequence is that of SsrA-binding protein from Haemophilus ducreyi (strain 35000HP / ATCC 700724).